A 79-amino-acid polypeptide reads, in one-letter code: MAKVTNNRNRKPRKKVCILSAKGIEHVDYKDVELLQRFINNNNKIASRRVTGASARMQRRIANAIKRARFVGLLPYVKE.

This sequence belongs to the bacterial ribosomal protein bS18 family. Part of the 30S ribosomal subunit. Forms a tight heterodimer with protein bS6.

Its function is as follows. Binds as a heterodimer with protein bS6 to the central domain of the 16S rRNA, where it helps stabilize the platform of the 30S subunit. This is Small ribosomal subunit protein bS18 from Ureaplasma parvum serovar 3 (strain ATCC 27815 / 27 / NCTC 11736).